Here is a 156-residue protein sequence, read N- to C-terminus: Large ribosomal subunit protein uL22 (156 aa).

The protein belongs to the universal ribosomal protein uL22 family. As to quaternary structure, part of the 50S ribosomal subunit.

This protein binds specifically to 23S rRNA. It makes multiple contacts with different domains of the 23S rRNA in the assembled 50S subunit and ribosome. Its function is as follows. The globular domain of the protein is located near the polypeptide exit tunnel on the outside of the subunit, while an extended beta-hairpin is found that lines the wall of the exit tunnel in the center of the 70S ribosome. In Sulfolobus acidocaldarius (strain ATCC 33909 / DSM 639 / JCM 8929 / NBRC 15157 / NCIMB 11770), this protein is Large ribosomal subunit protein uL22.